The primary structure comprises 214 residues: Ribosomal RNA small subunit methyltransferase G (214 aa).

S-adenosyl-L-methionine-binding positions include glycine 81, methionine 86, 132 to 133 (VE), and arginine 147.

The protein belongs to the methyltransferase superfamily. RNA methyltransferase RsmG family.

The protein resides in the cytoplasm. It catalyses the reaction guanosine(527) in 16S rRNA + S-adenosyl-L-methionine = N(7)-methylguanosine(527) in 16S rRNA + S-adenosyl-L-homocysteine. Its function is as follows. Specifically methylates the N7 position of guanine in position 527 of 16S rRNA. This Pseudomonas aeruginosa (strain LESB58) protein is Ribosomal RNA small subunit methyltransferase G.